The following is a 202-amino-acid chain: Small ribosomal subunit protein uS4c (202 aa).

The S4 RNA-binding domain maps to 90-158; it reads MRLDNIIFRL…MKRSRDSYEK (69 aa).

This sequence belongs to the universal ribosomal protein uS4 family. Part of the 30S ribosomal subunit. Contacts protein S5. The interaction surface between S4 and S5 is involved in control of translational fidelity.

The protein resides in the plastid. It is found in the chloroplast. Its function is as follows. One of the primary rRNA binding proteins, it binds directly to 16S rRNA where it nucleates assembly of the body of the 30S subunit. In terms of biological role, with S5 and S12 plays an important role in translational accuracy. The chain is Small ribosomal subunit protein uS4c (rps4) from Anthoceros angustus (Hornwort).